Here is an 82-residue protein sequence, read N- to C-terminus: Progonadoliberin-3 (82 aa).

An N-terminal signal peptide occupies residues 1 to 23 (MDLSSKTVVQVVMLALIAQVTFS). Gln24 is modified (pyrrolidone carboxylic acid). A Glycine amide modification is found at Gly33.

This sequence belongs to the GnRH family.

It is found in the secreted. Functionally, stimulates the secretion of gonadotropins. This Oncorhynchus masou (Cherry salmon) protein is Progonadoliberin-3 (gnrh3).